A 351-amino-acid polypeptide reads, in one-letter code: Outer membrane protein A (351 aa).

A signal peptide spans methionine 1–alanine 21. 8 beta stranded membrane-spanning segments follow: residues threonine 27–serine 37, glutamine 55–valine 66, valine 70–tryptophan 78, glutamine 96–proline 107, leucine 112–glycine 120, proline 147–alanine 156, isoleucine 161–glutamine 168, and leucine 187–arginine 195. Repeat copies occupy residues alanine 206–proline 207, alanine 208–proline 209, alanine 210–proline 211, and alanine 212–proline 213. Residues alanine 206–proline 213 form a 4 X 2 AA tandem repeats of A-P region. Residues valine 215 to lysine 343 form the OmpA-like domain. An intrachain disulfide couples cysteine 316 to cysteine 328.

This sequence belongs to the outer membrane OOP (TC 1.B.6) superfamily. OmpA family. In terms of assembly, monomer and homodimer.

It is found in the cell outer membrane. With TolR probably plays a role in maintaining the position of the peptidoglycan cell wall in the periplasm. Acts as a porin with low permeability that allows slow penetration of small solutes; an internal gate slows down solute passage. Its function is as follows. Required for conjugation with F-type plasmids; probably serves as the mating receptor on recipient cells. The chain is Outer membrane protein A from Escherichia fergusonii (strain ATCC 35469 / DSM 13698 / CCUG 18766 / IAM 14443 / JCM 21226 / LMG 7866 / NBRC 102419 / NCTC 12128 / CDC 0568-73).